Here is a 1620-residue protein sequence, read N- to C-terminus: DNA (cytosine-5)-methyltransferase 1 (1620 aa).

A disordered region spans residues 1–21; the sequence is MPARTAPARVPALASPAGSLP. The interval 1 to 120 is interaction with DMAP1; that stretch reads MPARTAPARV…SRPTWRAEMA (120 aa). An interaction with DNMT3A region spans residues 1 to 145; it reads MPARTAPARV…RRSKSDSDTL (145 aa). 2 interaction with the PRC2/EED-EZH2 complex regions span residues 1–343 and 305–609; these read MPAR…SERK and APET…RVMG. At serine 15 the chain carries Phosphoserine. Residues 16 to 109 form the DMAP1-binding domain; sequence PAGSLPDHVR…TQKANGCPAN (94 aa). Lysine 70 bears the N6,N6-dimethyllysine; by EHMT2 mark. Residues 96-369 form a disordered region; that stretch reads THTLTQKANG…PECGQHLDDP (274 aa). Positions 126–137 are enriched in basic residues; the sequence is PRSRPKPRGPRR. Serine 138 carries the phosphoserine modification. At lysine 139 the chain carries N6-methyllysine; by SETD7. The residue at position 140 (serine 140) is a Phosphoserine. Residues 144–155 are compositionally biased toward polar residues; the sequence is TLSVETSPSSVA. Phosphoserine; by CK1 is present on serine 146. Residues 147 to 217 are interaction with DNMT3B; sequence VETSPSSVAT…SGAAAAVEKL (71 aa). 2 positions are modified to phosphoserine: serine 150 and serine 152. An interaction with PCNA region spans residues 161–172; that stretch reads RQTTITAHFTKG. Phosphothreonine is present on threonine 164. Lysine 171 is subject to N6-acetyllysine. A Nuclear localization signal motif is present at residues 175 to 202; it reads KRKPKEESEEGNSAESAAEERDQDKKRR. Over residues 192 to 205 the composition is skewed to basic and acidic residues; it reads AEERDQDKKRRVVD. Serine 240 is modified (phosphoserine). 2 stretches are compositionally biased toward basic and acidic residues: residues 246–267 and 286–300; these read RELSLRRKSKEDPDREARPETH and QPRDPAAKRRPKEAE. Residue lysine 255 is modified to N6-acetyllysine; alternate. Lysine 255 participates in a covalent cross-link: Glycyl lysine isopeptide (Lys-Gly) (interchain with G-Cter in SUMO2); alternate. Residues 308 to 317 show a composition bias toward acidic residues; that stretch reads TPEDRDEDER. Positions 328–556 are DNA replication foci-targeting sequence; the sequence is KLESHTVPVQ…NVNRFTEDSL (229 aa). Positions 359 and 362 each coordinate Zn(2+). N6-acetyllysine is present on lysine 372. Zn(2+) is bound by residues cysteine 420 and histidine 424. A phosphoserine mark is found at serine 515 and serine 555. The CXXC-type zinc finger occupies 649-695; the sequence is NAMKRRRCGVCEVCQQPECGKCKACKDMVKFGGTGRSKQACLKRRCP. Residues cysteine 656, cysteine 659, cysteine 662, cysteine 667, cysteine 670, cysteine 673, cysteine 689, and cysteine 694 each contribute to the Zn(2+) site. The interval 696 to 757 is autoinhibitory linker; sequence NLAVKEADDD…TYYQKVSIDE (62 aa). The interaction with HDAC1 stretch occupies residues 696–813; the sequence is NLAVKEADDD…TDTVLGATSD (118 aa). Residues 702–713 are compositionally biased toward acidic residues; the sequence is ADDDEEADDDVS. The segment at 702 to 732 is disordered; sequence ADDDEEADDDVSEMPSPKKLHQGKKKKQNKD. Phosphoserine is present on residues serine 713 and serine 717. The segment covering 719–730 has biased composition (basic residues); it reads KKLHQGKKKKQN. Serine 735 carries the phosphoserine modification. At lysine 752 the chain carries N6-acetyllysine. The region spanning 758–884 is the BAH 1 domain; that stretch reads EMLEVGDCVS…QEYARFESPP (127 aa). Serine 882 is subject to Phosphoserine. Lysine 895, lysine 961, lysine 965, and lysine 979 each carry N6-acetyllysine. Residues 976 to 1103 enclose the BAH 2 domain; that stretch reads HYRKYSDYIK…SKTKNFEDPP (128 aa). The segment at 1097-1136 is disordered; sequence KNFEDPPNHARSPGNKGKGKGKGKGKGKHQVSEPKEPEAA. 6 consecutive repeat copies span residues 1112–1113, 1114–1115, 1116–1117, 1118–1119, 1120–1121, and 1122–1123. The 7 X 2 AA tandem repeats of K-G stretch occupies residues 1112 to 1125; that stretch reads KGKGKGKGKGKGKH. A compositionally biased stretch (basic residues) spans 1113–1125; it reads GKGKGKGKGKGKH. An N6-acetyllysine mark is found at lysine 1114, lysine 1116, lysine 1118, lysine 1120, lysine 1122, and lysine 1124. A 7; approximate repeat occupies 1124 to 1125; that stretch reads KH. The segment at 1124–1620 is interaction with the PRC2/EED-EZH2 complex; sequence KHQVSEPKEP…KAKEEAATKD (497 aa). The span at 1126–1135 shows a compositional bias: basic and acidic residues; that stretch reads QVSEPKEPEA. Residues 1142 to 1601 enclose the SAM-dependent MTase C5-type domain; sequence LRTLDVFSGC…LEIKLCLLSS (460 aa). The tract at residues 1142 to 1620 is catalytic; the sequence is LRTLDVFSGC…KAKEEAATKD (479 aa). S-adenosyl-L-methionine is bound by residues serine 1149, 1153 to 1154, 1171 to 1172, and 1193 to 1194; these read GL, EM, and DC. Residue cysteine 1229 is part of the active site. An N6-acetyllysine mark is found at lysine 1352 and lysine 1418. Valine 1582 provides a ligand contact to S-adenosyl-L-methionine. A Glycyl lysine isopeptide (Lys-Gly) (interchain with G-Cter in SUMO2) cross-link involves residue lysine 1611.

It belongs to the class I-like SAM-binding methyltransferase superfamily. C5-methyltransferase family. Homodimer. Forms a stable complex with E2F1, BB1 and HDAC1. Forms a complex with DMAP1 and HDAC2, with direct interaction. Interacts with the PRC2/EED-EZH2 complex. Probably part of a corepressor complex containing ZNF304, TRIM28, SETDB1 and DNMT1. Interacts with UHRF1; promoting its recruitment to hemimethylated DNA. Interacts with USP7, promoting its deubiquitination. Interacts with BAZ2A/TIP5. Interacts with PCNA. Interacts with MBD2 and MBD3. Interacts with DNMT3A and DNMT3B. Interacts with UBC9. Interacts with HDAC1. Interacts with CSNK1D. Interacts with SIRT7. Interacts with ZNF263; recruited to the SIX3 promoter along with other proteins involved in chromatin modification and transcriptional corepression where it contributes to transcriptional repression. Interacts with L3MBTL3 and DCAF5; the interaction requires DNMT1 methylation at Lys-139 and is necessary to target DNMT1 for ubiquitination by the CRL4-DCAF5 E3 ubiquitin ligase complex and proteasomal degradation. Interacts with PHF20L1; the interaction requires DNMT1 methylation at Lys-139 and protects DNMT1 from ubiquitination and proteasomal degradation. In terms of processing, sumoylated; sumoylation increases activity. Phosphorylation at Ser-146 by CK1 reduces DNA-binding activity. Post-translationally, acetylation on multiple lysines, mainly by KAT2B/PCAF, regulates cell cycle G(2)/M transition. Deacetylation of Lys-1352 and Lys-1418 by SIRT1 increases methyltransferase activity. In terms of processing, phosphorylation of Ser-152 by CDKs is important for enzymatic activity and protein stability. Phosphorylation of Ser-140 by AKT1 prevents methylation by SETD7 thereby increasing DNMT1 stability. Methylation at Lys-139 by SETD7 is necessary for the regulation of DNMT1 proteasomal degradation. Post-translationally, ubiquitinated by UHRF1; interaction with USP7 counteracts ubiquitination by UHRF1 by promoting deubiquitination and preventing degradation by the proteasome. In terms of tissue distribution, isoform 1 is expressed in embryonic stem cells and in somatic tissues. Isoform 2 is expressed in oocytes, preimplantation embryos, testis and in skeletal muscle during myogenesis.

Its subcellular location is the nucleus. It is found in the cytoplasm. The catalysed reaction is a 2'-deoxycytidine in DNA + S-adenosyl-L-methionine = a 5-methyl-2'-deoxycytidine in DNA + S-adenosyl-L-homocysteine + H(+). Allosterically regulated. The binding of 5-methylcytosine-containing DNA to the N-terminal parts of DNMT1 causes an allosteric activation of the catalytic domain by a direct interaction of its Zn-binding domain with the catalytic domain. Methylates CpG residues. Preferentially methylates hemimethylated DNA. Associates with DNA replication sites in S phase maintaining the methylation pattern in the newly synthesized strand, that is essential for epigenetic inheritance. Associates with chromatin during G2 and M phases to maintain DNA methylation independently of replication. It is responsible for maintaining methylation patterns established in development. DNA methylation is coordinated with methylation of histones. Mediates transcriptional repression by direct binding to HDAC2. In association with DNMT3B and via the recruitment of CTCFL/BORIS, involved in activation of BAG1 gene expression by modulating dimethylation of promoter histone H3 at H3K4 and H3K9. Probably forms a corepressor complex required for activated KRAS-mediated promoter hypermethylation and transcriptional silencing of tumor suppressor genes (TSGs) or other tumor-related genes in colorectal cancer (CRC) cells. Also required to maintain a transcriptionally repressive state of genes in undifferentiated embryonic stem cells (ESCs). Associates at promoter regions of tumor suppressor genes (TSGs) leading to their gene silencing. Promotes tumor growth. The chain is DNA (cytosine-5)-methyltransferase 1 (Dnmt1) from Mus musculus (Mouse).